A 27-amino-acid chain; its full sequence is Equinin A (27 aa).

A compositionally biased stretch (basic and acidic residues) spans 1 to 13 (AVDKGGGKAEKKD). Residues 1 to 27 (AVDKGGGKAEKKDGNRKKKLAGGEGGG) form a disordered region.

The protein resides in the secreted. Functionally, peptide with unknown function. Does not show antimicrobial and hemolytic activities. The chain is Equinin A from Actinia equina (Beadlet anemone).